The chain runs to 967 residues: Leucine--tRNA ligase (967 aa).

A 'HIGH' region motif is present at residues 43–53 (PYLSGHLHVGH). The short motif at 650–654 (KMSKS) is the 'KMSKS' region element. Lysine 653 provides a ligand contact to ATP.

It belongs to the class-I aminoacyl-tRNA synthetase family.

Its subcellular location is the cytoplasm. It catalyses the reaction tRNA(Leu) + L-leucine + ATP = L-leucyl-tRNA(Leu) + AMP + diphosphate. The protein is Leucine--tRNA ligase of Pyrococcus abyssi (strain GE5 / Orsay).